The primary structure comprises 437 residues: UDP-N-acetylmuramate--L-alanine ligase (437 aa).

108–114 provides a ligand contact to ATP; the sequence is GAHGKTS.

The protein belongs to the MurCDEF family.

The protein resides in the cytoplasm. The catalysed reaction is UDP-N-acetyl-alpha-D-muramate + L-alanine + ATP = UDP-N-acetyl-alpha-D-muramoyl-L-alanine + ADP + phosphate + H(+). Its pathway is cell wall biogenesis; peptidoglycan biosynthesis. Functionally, cell wall formation. This chain is UDP-N-acetylmuramate--L-alanine ligase, found in Staphylococcus saprophyticus subsp. saprophyticus (strain ATCC 15305 / DSM 20229 / NCIMB 8711 / NCTC 7292 / S-41).